Here is a 339-residue protein sequence, read N- to C-terminus: Phenylalanine--tRNA ligase alpha subunit (339 aa).

Glu-254 lines the Mg(2+) pocket.

This sequence belongs to the class-II aminoacyl-tRNA synthetase family. Phe-tRNA synthetase alpha subunit type 1 subfamily. As to quaternary structure, tetramer of two alpha and two beta subunits. It depends on Mg(2+) as a cofactor.

The protein localises to the cytoplasm. It carries out the reaction tRNA(Phe) + L-phenylalanine + ATP = L-phenylalanyl-tRNA(Phe) + AMP + diphosphate + H(+). This is Phenylalanine--tRNA ligase alpha subunit from Clostridium perfringens (strain ATCC 13124 / DSM 756 / JCM 1290 / NCIMB 6125 / NCTC 8237 / Type A).